A 221-amino-acid chain; its full sequence is 7-cyano-7-deazaguanine synthase (221 aa).

10 to 20 (FSGGQDSTTCL) lines the ATP pocket. C186, C195, C198, and C201 together coordinate Zn(2+).

It belongs to the QueC family. Homodimer. Zn(2+) is required as a cofactor.

It carries out the reaction 7-carboxy-7-deazaguanine + NH4(+) + ATP = 7-cyano-7-deazaguanine + ADP + phosphate + H2O + H(+). Its pathway is purine metabolism; 7-cyano-7-deazaguanine biosynthesis. Functionally, catalyzes the ATP-dependent conversion of 7-carboxy-7-deazaguanine (CDG) to 7-cyano-7-deazaguanine (preQ(0)). The polypeptide is 7-cyano-7-deazaguanine synthase (Geobacillus thermodenitrificans (strain NG80-2)).